The sequence spans 177 residues: Large ribosomal subunit protein uL6 (177 aa).

This sequence belongs to the universal ribosomal protein uL6 family. Part of the 50S ribosomal subunit.

This protein binds to the 23S rRNA, and is important in its secondary structure. It is located near the subunit interface in the base of the L7/L12 stalk, and near the tRNA binding site of the peptidyltransferase center. This is Large ribosomal subunit protein uL6 from Mannheimia succiniciproducens (strain KCTC 0769BP / MBEL55E).